The chain runs to 648 residues: Centrosomal protein of 63 kDa-B (648 aa).

Coiled coils occupy residues 19–188 (DSCE…QSHN) and 222–555 (EEEL…DAAS). Serine 559 is modified (phosphoserine; by atm and atr). A coiled-coil region spans residues 611-644 (FLQEEEQRSHELLQRLNAHIEELKQESQRTVEHF).

Belongs to the CEP63 family. Phosphorylation at Ser-559 by atm and atr promotes its delocalization from the centrosome and impairs its ability to promote centrosome dependent spindle assembly.

The protein localises to the cytoplasm. It localises to the cytoskeleton. The protein resides in the microtubule organizing center. Its subcellular location is the centrosome. It is found in the centriole. Functionally, required for normal spindle assembly. Plays a key role in mother-centriole-dependent centriole duplication. Plays a role in DNA damage response. Following DNA damage, such as double-strand breaks (DSBs), is removed from centrosomes; this leads to the inactivation of spindle assembly and delay in mitotic progression. The polypeptide is Centrosomal protein of 63 kDa-B (cep63-b) (Xenopus laevis (African clawed frog)).